Reading from the N-terminus, the 392-residue chain is GTPase Obg (392 aa).

The Obg domain maps to 1–159; the sequence is MKFVDEATIL…RDLQLELMLL (159 aa). Residues 127-146 are disordered; the sequence is NTRFKSSVNRTPRQKTMGTP. Positions 129 to 143 are enriched in polar residues; the sequence is RFKSSVNRTPRQKTM. The 174-residue stretch at 160-333 folds into the OBG-type G domain; that stretch reads ADVGMLGLPN…LCWDVMAFIK (174 aa). Residues 166–173, 191–195, 213–216, 283–286, and 314–316 each bind GTP; these read GLPNAGKS, FTTLV, DIPG, NKVD, and SAA. 2 residues coordinate Mg(2+): S173 and T193. Positions 360–392 are disordered; the sequence is QLEEAQPEVEEDDDWDDDWDEDDEEGVETIYQR. Residues 364–386 are compositionally biased toward acidic residues; it reads AQPEVEEDDDWDDDWDEDDEEGV.

Belongs to the TRAFAC class OBG-HflX-like GTPase superfamily. OBG GTPase family. As to quaternary structure, monomer. Mg(2+) is required as a cofactor.

It is found in the cytoplasm. An essential GTPase which binds GTP, GDP and possibly (p)ppGpp with moderate affinity, with high nucleotide exchange rates and a fairly low GTP hydrolysis rate. Plays a role in control of the cell cycle, stress response, ribosome biogenesis and in those bacteria that undergo differentiation, in morphogenesis control. In Erwinia tasmaniensis (strain DSM 17950 / CFBP 7177 / CIP 109463 / NCPPB 4357 / Et1/99), this protein is GTPase Obg.